We begin with the raw amino-acid sequence, 189 residues long: Thermostable direct hemolysin 2 (189 aa).

A signal peptide spans 1–24 (MKYRYFAKKSFLFISMLAAFKTFA). An intrachain disulfide couples cysteine 175 to cysteine 185.

Belongs to the TDH hemolysin family. As to quaternary structure, homodimer.

Its function is as follows. Bacterial hemolysins are exotoxins that attack blood cell membranes and cause cell rupture by mechanisms not clearly defined. The sequence is that of Thermostable direct hemolysin 2 (tdh2) from Vibrio parahaemolyticus serotype O3:K6 (strain RIMD 2210633).